The following is a 777-amino-acid chain: Lon protease (777 aa).

Residues 11–204 (IPVLPLRDVV…FLMAIMETEI (194 aa)) enclose the Lon N-terminal domain. 356 to 363 (GPPGVGKT) serves as a coordination point for ATP. A Lon proteolytic domain is found at 592 to 773 (LNQIGQVVGL…EEVLKIALEN (182 aa)). Catalysis depends on residues Ser679 and Lys722.

Belongs to the peptidase S16 family. Homohexamer. Organized in a ring with a central cavity.

Its subcellular location is the cytoplasm. It catalyses the reaction Hydrolysis of proteins in presence of ATP.. ATP-dependent serine protease that mediates the selective degradation of mutant and abnormal proteins as well as certain short-lived regulatory proteins. Required for cellular homeostasis and for survival from DNA damage and developmental changes induced by stress. Degrades polypeptides processively to yield small peptide fragments that are 5 to 10 amino acids long. Binds to DNA in a double-stranded, site-specific manner. The polypeptide is Lon protease (Buchnera aphidicola subsp. Schizaphis graminum (strain Sg)).